A 632-amino-acid chain; its full sequence is Lipoma-preferred partner homolog (632 aa).

Disordered stretches follow at residues 1–118 (MSHP…RSSL) and 135–249 (SSPY…RSYN). The span at 26–40 (THSFGTPSISVSTQQ) shows a compositional bias: polar residues. Residues 41-53 (PPKKFAPVVAPKP) show a composition bias toward low complexity. K109 is subject to N6-acetyllysine. Phosphoserine occurs at positions 117 and 152. The span at 144–160 (PGSSSSIASPPVSTPVT) shows a compositional bias: low complexity. Composition is skewed to polar residues over residues 172–182 (PLTATKKSATK) and 206–239 (SYST…SSGQ). At Y241 the chain carries Phosphotyrosine. R246 bears the Omega-N-methylarginine mark. Residue K324 forms a Glycyl lysine isopeptide (Lys-Gly) (interchain with G-Cter in SUMO1) linkage. LIM zinc-binding domains lie at 434 to 493 (GRCA…INTL), 494 to 554 (EQCS…KFAP), and 555 to 623 (RCSV…RIRV).

The protein belongs to the zyxin/ajuba family. As to quaternary structure, interacts with PDZ domains of SCRIB, with VASP and with ACTN1/alpha-actinin.

It is found in the nucleus. The protein resides in the cytoplasm. Its subcellular location is the cell junction. May play a structural role at sites of cell adhesion in maintaining cell shape and motility. In addition to these structural functions, it may also be implicated in signaling events and activation of gene transcription. May be involved in signal transduction from cell adhesion sites to the nucleus allowing successful integration of signals arising from soluble factors and cell-cell adhesion. Also suggested to serve as a scaffold protein upon which distinct protein complexes are assembled in the cytoplasm and in the nucleus. The polypeptide is Lipoma-preferred partner homolog (Lpp) (Rattus norvegicus (Rat)).